The sequence spans 582 residues: Formate--tetrahydrofolate ligase (582 aa).

An ATP-binding site is contributed by 65–72; it reads TPLGEGKT.

This sequence belongs to the formate--tetrahydrofolate ligase family.

It carries out the reaction (6S)-5,6,7,8-tetrahydrofolate + formate + ATP = (6R)-10-formyltetrahydrofolate + ADP + phosphate. Its pathway is one-carbon metabolism; tetrahydrofolate interconversion. The protein is Formate--tetrahydrofolate ligase of Vibrio campbellii (strain ATCC BAA-1116).